We begin with the raw amino-acid sequence, 60 residues long: Large ribosomal subunit protein bL32 (60 aa).

This sequence belongs to the bacterial ribosomal protein bL32 family.

This Streptococcus sanguinis (strain SK36) protein is Large ribosomal subunit protein bL32.